The sequence spans 354 residues: Protein REDOX 1 (354 aa).

Cys44 lines the Zn(2+) pocket. 45 to 49 (HSDLH) serves as a coordination point for NAD(+). 5 residues coordinate Zn(2+): His66, Cys97, Cys100, Cys103, and Cys111. NAD(+) contacts are provided by residues 185–190 (GLGGLG), Lys214, 271–273 (VGA), 295–297 (SAV), and Arg340.

It belongs to the zinc-containing alcohol dehydrogenase family. Zn(2+) serves as cofactor. As to expression, expressed in leaf epidermis.

The enzyme catalyses 3,17-didehydrostemmadenine + NADPH + H2O = (16S)-deshydroxymethyl-stemmadenine + formate + NADP(+). The catalysed reaction is 3,17-didehydrostemmadenine + NADPH + H2O = (16R)-deshydroxymethyl-stemmadenine + formate + NADP(+). It catalyses the reaction 17-dehydrostemmadenine + NADP(+) = 3,17-didehydrostemmadenine + NADPH. It participates in alkaloid biosynthesis. Functionally, component of iboga and aspidosperma monoterpenoid indole alkaloids (MIAs, e.g. tabersonine and catharanthine) biosynthesis pathway from 19E-geissoschizine. Catalyzes the first oxidation step of the unstable intermediate product resulting from the reaction triggered by the geissoschizine oxidase (GO) in the stemmadenine biosynthesis process from 19E-geissoschizine. The protein is Protein REDOX 1 of Catharanthus roseus (Madagascar periwinkle).